The sequence spans 1357 residues: DNA-directed RNA polymerase subunit beta (1357 aa).

This sequence belongs to the RNA polymerase beta chain family. The RNAP catalytic core consists of 2 alpha, 1 beta, 1 beta' and 1 omega subunit. When a sigma factor is associated with the core the holoenzyme is formed, which can initiate transcription.

The enzyme catalyses RNA(n) + a ribonucleoside 5'-triphosphate = RNA(n+1) + diphosphate. In terms of biological role, DNA-dependent RNA polymerase catalyzes the transcription of DNA into RNA using the four ribonucleoside triphosphates as substrates. This chain is DNA-directed RNA polymerase subunit beta, found in Neorickettsia sennetsu (Ehrlichia sennetsu).